Here is a 135-residue protein sequence, read N- to C-terminus: Large ribosomal subunit protein uL16c (135 aa).

The segment at 1 to 20 is disordered; it reads MLSPKRTRFRKQHRGRMKGK.

Belongs to the universal ribosomal protein uL16 family. In terms of assembly, part of the 50S ribosomal subunit.

The protein localises to the plastid. Its subcellular location is the chloroplast. The protein is Large ribosomal subunit protein uL16c of Landoltia punctata (Dotted duckmeat).